The following is a 569-amino-acid chain: Proline--tRNA ligase (569 aa).

This sequence belongs to the class-II aminoacyl-tRNA synthetase family. ProS type 1 subfamily. Homodimer.

The protein localises to the cytoplasm. The catalysed reaction is tRNA(Pro) + L-proline + ATP = L-prolyl-tRNA(Pro) + AMP + diphosphate. Functionally, catalyzes the attachment of proline to tRNA(Pro) in a two-step reaction: proline is first activated by ATP to form Pro-AMP and then transferred to the acceptor end of tRNA(Pro). As ProRS can inadvertently accommodate and process non-cognate amino acids such as alanine and cysteine, to avoid such errors it has two additional distinct editing activities against alanine. One activity is designated as 'pretransfer' editing and involves the tRNA(Pro)-independent hydrolysis of activated Ala-AMP. The other activity is designated 'posttransfer' editing and involves deacylation of mischarged Ala-tRNA(Pro). The misacylated Cys-tRNA(Pro) is not edited by ProRS. The chain is Proline--tRNA ligase from Campylobacter jejuni subsp. doylei (strain ATCC BAA-1458 / RM4099 / 269.97).